The following is a 201-amino-acid chain: Ribonuclease HII (201 aa).

Positions Leu-10–Pro-200 constitute an RNase H type-2 domain. A divalent metal cation is bound by residues Asp-16, Glu-17, and Asp-108.

Belongs to the RNase HII family. Mn(2+) serves as cofactor. Requires Mg(2+) as cofactor.

Its subcellular location is the cytoplasm. It carries out the reaction Endonucleolytic cleavage to 5'-phosphomonoester.. In terms of biological role, endonuclease that specifically degrades the RNA of RNA-DNA hybrids. In Phocaeicola vulgatus (strain ATCC 8482 / DSM 1447 / JCM 5826 / CCUG 4940 / NBRC 14291 / NCTC 11154) (Bacteroides vulgatus), this protein is Ribonuclease HII.